Here is a 766-residue protein sequence, read N- to C-terminus: Serine/threonine-protein kinase B-raf (766 aa).

A compositionally biased stretch (gly residues) spans 1–13 (MAALSGGGGGGAE). Positions 1 to 38 (MAALSGGGGGGAEPGQALFNGDMEPEAGAGAGAAASSA) are disordered. Residue Ala2 is modified to N-acetylalanine. At Ser151 the chain carries Phosphoserine. One can recognise an RBD domain in the interval 155 to 227 (PIVRVFLPNK…TGEELHVEVL (73 aa)). A Phorbol-ester/DAG-type zinc finger spans residues 234–280 (THNFVRKTFFTLAFCDFCRKLLFQGFRCQTCGYKFHQRCSTEVPLMC). Positions 235, 248, 251, 261, 264, 269, 272, and 280 each coordinate Zn(2+). The disordered stretch occupies residues 308–454 (AETALTSGSS…DSSDDWEIPD (147 aa)). The segment covering 314 to 341 (SGSSPSAPASDSIGPQILTSPSPSKSIP) has biased composition (low complexity). Ser333 carries the post-translational modification Phosphoserine. Residues 348–363 (PADEDHRNQFGQRDRS) are compositionally biased toward basic and acidic residues. Ser365 bears the Phosphoserine; by SGK1 mark. Phosphothreonine; by autocatalysis is present on Thr373. Thr396 carries the phosphothreonine modification. Ser399 carries the phosphoserine modification. Position 401 is a phosphothreonine (Thr401). Over residues 423 to 447 (QRERKSSSSSEDRNRMKTLGRRDSS) the composition is skewed to basic and acidic residues. A phosphoserine mark is found at Ser446 and Ser447. In terms of domain architecture, Protein kinase spans 457–717 (ITVGQRIGSG…PQILASIELL (261 aa)). ATP is bound by residues 463–471 (IGSGSFGTV) and Lys483. Asp576 serves as the catalytic Proton acceptor. Lys578 is covalently cross-linked (Glycyl lysine isopeptide (Lys-Gly) (interchain with G-Cter in ubiquitin)). Position 671 is an omega-N-methylarginine; by PRMT5 (Arg671). A phosphoserine mark is found at Ser729 and Ser750. The residue at position 753 (Thr753) is a Phosphothreonine; by MAPK1.

Belongs to the protein kinase superfamily. TKL Ser/Thr protein kinase family. RAF subfamily. As to quaternary structure, monomer. Homodimer. Heterodimerizes with RAF1, and the heterodimer possesses a highly increased kinase activity compared to the respective homodimers or monomers. Heterodimerization is mitogen-regulated and enhanced by 14-3-3 proteins. MAPK1/ERK2 activation can induce a negative feedback that promotes the dissociation of the heterodimer by phosphorylating BRAF at Thr-753. Heterodimerizes (via N-terminus) with KSR1 (via N-terminus) or KSR2 (via N-terminus) in a MAP2K1-dependent manner. Interacts with MAP2K1 and MAP2K2. Found in a complex with at least BRAF, HRAS, MAP2K1, MAPK3 and RGS14. Interacts with RIT1. Interacts (via N-terminus) with RGS14 (via RBD domains); the interaction mediates the formation of a ternary complex with RAF1, a ternary complex inhibited by GNAI1. Interacts with DGKH. Interacts with PRMT5. Interacts with KSR2. Interacts with AKAP13, MAP2K1 and KSR1. Identified in a complex with AKAP13, MAP2K1 and KSR1. Interacts with FNIP1 and FNIP2. Requires Zn(2+) as cofactor. Phosphorylation at Ser-365 by SGK1 inhibits its activity. Phosphorylation at Thr-753 by MAPK1. Dephosphorylation of Ser-365 by the SHOC2-MRAS-PP1c (SMP) complex consisting of SHOC2, GTP-bound M-Ras/MRAS and the catalytic subunit of protein phosphatase 1 (PPP1CA, PPP1CB or PPP1CC); this relieves inactivation and stimulates kinase activity. In terms of processing, methylation at Arg-671 decreases stability and kinase activity. Post-translationally, ubiquitinated by RNF149; which leads to proteasomal degradation. Polyubiquitinated at Lys-578 in response to EGF. Brain and testis.

It is found in the nucleus. The protein localises to the cytoplasm. It localises to the cell membrane. The enzyme catalyses L-seryl-[protein] + ATP = O-phospho-L-seryl-[protein] + ADP + H(+). The catalysed reaction is L-threonyl-[protein] + ATP = O-phospho-L-threonyl-[protein] + ADP + H(+). In quiescent cells, maintained in an inactive state via an intramolecular interaction between the protein kinase and N-terminal domains. Following mitogen-mediated cell activation, binds via its RGB domain to active HRAS (GTP-bound) which releases the inhibitory intramolecular interaction between the two domains. This allows the MAP2K1-mediated dimerization of KSR1 or KSR2, and BRAF which activates BRAF. Protein kinase involved in the transduction of mitogenic signals from the cell membrane to the nucleus. Phosphorylates MAP2K1, and thereby activates the MAP kinase signal transduction pathway. Phosphorylates PFKFB2. May play a role in the postsynaptic responses of hippocampal neurons. This chain is Serine/threonine-protein kinase B-raf, found in Homo sapiens (Human).